Consider the following 306-residue polypeptide: ATP phosphoribosyltransferase (306 aa).

This sequence belongs to the ATP phosphoribosyltransferase family.

It localises to the cytoplasm. It carries out the reaction 1-(5-phospho-beta-D-ribosyl)-ATP + diphosphate = 5-phospho-alpha-D-ribose 1-diphosphate + ATP. It participates in amino-acid biosynthesis; L-histidine biosynthesis; L-histidine from 5-phospho-alpha-D-ribose 1-diphosphate: step 1/9. In terms of biological role, catalyzes the condensation of ATP and 5-phosphoribose 1-diphosphate to form N'-(5'-phosphoribosyl)-ATP (PR-ATP). Has a crucial role in the pathway because the rate of histidine biosynthesis seems to be controlled primarily by regulation of the enzymatic activity. The polypeptide is ATP phosphoribosyltransferase (HIS1) (Candida glabrata (strain ATCC 2001 / BCRC 20586 / JCM 3761 / NBRC 0622 / NRRL Y-65 / CBS 138) (Yeast)).